Consider the following 91-residue polypeptide: Small ribosomal subunit protein uS19 (91 aa).

The protein belongs to the universal ribosomal protein uS19 family.

Protein S19 forms a complex with S13 that binds strongly to the 16S ribosomal RNA. This is Small ribosomal subunit protein uS19 from Syntrophotalea carbinolica (strain DSM 2380 / NBRC 103641 / GraBd1) (Pelobacter carbinolicus).